The sequence spans 75 residues: Small ribosomal subunit protein bS18 (75 aa).

Belongs to the bacterial ribosomal protein bS18 family. In terms of assembly, part of the 30S ribosomal subunit. Forms a tight heterodimer with protein bS6.

Its function is as follows. Binds as a heterodimer with protein bS6 to the central domain of the 16S rRNA, where it helps stabilize the platform of the 30S subunit. This chain is Small ribosomal subunit protein bS18, found in Baumannia cicadellinicola subsp. Homalodisca coagulata.